Reading from the N-terminus, the 25-residue chain is uncharacterized protein (25 aa).

The protein localises to the plastid. It is found in the chloroplast. This is an uncharacterized protein from Trieres chinensis (Marine centric diatom).